The primary structure comprises 450 residues: Paired box protein Pax-8 (450 aa).

The paired DNA-binding region spans 9–135 (GHGGLNQLGG…SSINRIIRTK (127 aa)). Residues 12–68 (GLNQLGGAFVNGRPLPEVVRQRIVDLAHQGVRPCDISRQLRVSHGCVSKILGRYYET) are PAI subdomain. Positions 87–135 (KVVEKIGDYKRQNPTMFAWEIRDRLLAEGVCDNDTVPSVSSINRIIRTK) are RED subdomain. Positions 159–182 (LIPSSAVTPPESPQSDSLGSTYSI) are enriched in polar residues. Positions 159-222 (LIPSSAVTPP…QSSSSGPRKH (64 aa)) are disordered. At Ser303 the chain carries Phosphoserine.

Interacts with WWTR1. Expressed in the excretory system, thyroid gland and Wilms tumors.

The protein localises to the nucleus. Its function is as follows. Transcription factor for the thyroid-specific expression of the genes exclusively expressed in the thyroid cell type, maintaining the functional differentiation of such cells. The chain is Paired box protein Pax-8 (PAX8) from Homo sapiens (Human).